A 397-amino-acid polypeptide reads, in one-letter code: Acetate kinase 1 (397 aa).

Position 8 (Asn-8) interacts with Mg(2+). Residue Lys-15 coordinates ATP. Arg-89 contacts substrate. Asp-146 acts as the Proton donor/acceptor in catalysis. ATP-binding positions include 206–210 (HLGNG), 281–283 (DFR), and 329–333 (GVGEN). Residue Glu-380 coordinates Mg(2+).

Belongs to the acetokinase family. Homodimer. Mg(2+) is required as a cofactor. It depends on Mn(2+) as a cofactor.

The protein resides in the cytoplasm. It catalyses the reaction acetate + ATP = acetyl phosphate + ADP. It functions in the pathway metabolic intermediate biosynthesis; acetyl-CoA biosynthesis; acetyl-CoA from acetate: step 1/2. Functionally, catalyzes the formation of acetyl phosphate from acetate and ATP. Can also catalyze the reverse reaction. The chain is Acetate kinase 1 from Listeria monocytogenes serotype 4b (strain F2365).